A 148-amino-acid polypeptide reads, in one-letter code: UPF0260 protein PM0539 (148 aa).

This sequence belongs to the UPF0260 family.

This Pasteurella multocida (strain Pm70) protein is UPF0260 protein PM0539.